Consider the following 492-residue polypeptide: Protein adenylyltransferase Fic (492 aa).

The span at 1-18 shows a compositional bias: low complexity; that stretch reads MGTEAEQPSPPAQQQDQE. Positions 1 to 26 are disordered; sequence MGTEAEQPSPPAQQQDQENPPLCKAQ. A helical transmembrane segment spans residues 33 to 55; that stretch reads LYRFVLIFVAGSLAAWTFHALSS. TPR repeat units lie at residues 118 to 151 and 152 to 186; these read ALGA…APRH and PEVL…SPSN. The short motif at 243 to 248 is the Inhibitory (S/T)XXXE(G/N) motif element; that stretch reads SVGIEG. ATP-binding positions include E247 and 328–331; that span reads VGGH. The region spanning 297–432 is the Fido domain; sequence ITIKDILELH…IRPFVRFIAD (136 aa). Residue H375 is part of the active site. ATP is bound by residues 379-386, 411-412, and N419; these read DGNGRTSR and YY.

This sequence belongs to the fic family. Homodimer; homodimerization may regulate adenylyltransferase and phosphodiesterase activities.

The protein localises to the membrane. It catalyses the reaction L-tyrosyl-[protein] + ATP = O-(5'-adenylyl)-L-tyrosyl-[protein] + diphosphate. The enzyme catalyses L-threonyl-[protein] + ATP = 3-O-(5'-adenylyl)-L-threonyl-[protein] + diphosphate. It carries out the reaction 3-O-(5'-adenylyl)-L-threonyl-[protein] + H2O = L-threonyl-[protein] + AMP + H(+). With respect to regulation, the side chain of Glu-247 determines which of the two opposing activities (AMPylase or de-AMPylase) will take place. In response to endoplasmic reticulum stress, mediates de-AMPylase activity. Adenylyltransferase activity is inhibited by the inhibitory helix present at the N-terminus: Glu-247 binds ATP and competes with ATP-binding at Arg-386, thereby preventing adenylyltransferase activity. In unstressed cells, disengagement of Glu-247 promotes adenylyltransferase activity. Activation dissociates ATP-binding from Glu-247, allowing ordered binding of the entire ATP moiety with the alpha-phosphate in an orientation that is productive for accepting an incoming target hydroxyl side chain. Its function is as follows. Protein that can both mediate the addition of adenosine 5'-monophosphate (AMP) to specific residues of target proteins (AMPylation), and the removal of the same modification from target proteins (de-AMPylation), depending on the context. The side chain of Glu-247 determines which of the two opposing activities (AMPylase or de-AMPylase) will take place. Acts as a key regulator of the unfolded protein response (UPR) by mediating AMPylation or de-AMPylation of Hsc70-3/BiP. In unstressed cells, acts as an adenylyltransferase by mediating AMPylation of Hsc70-3/BiP at 'Thr-518', thereby inactivating it. In response to endoplasmic reticulum stress, acts as a phosphodiesterase by mediating removal of ATP (de-AMPylation) from Hsc70-3/BiP at 'Thr-518', leading to restore HSPA5/BiP activity. This is Protein adenylyltransferase Fic from Drosophila melanogaster (Fruit fly).